Here is a 421-residue protein sequence, read N- to C-terminus: Aspartokinase (421 aa).

7–10 (KYGG) serves as a coordination point for ATP. Substrate is bound at residue 25–30 (RIVATK). S41 contributes to the ATP binding site. Residues 45 to 49 (DTTDD), E74, 125 to 126 (LE), 151 to 154 (RGGS), and S154 each bind substrate. ATP contacts are provided by residues 174–175 (TD), 180–185 (FSADPR), and K210. 2 consecutive ACT domains span residues 267 to 348 (VTIV…GKVS) and 349 to 421 (LIGA…GTGR). Residues D274, 274-279 (DIPGYA), 292-294 (NID), Q298, 360-361 (VT), 374-375 (NI), and 381-382 (SE) contribute to the substrate site.

The protein belongs to the aspartokinase family. As to quaternary structure, heterotetramer consisting of 2 isoforms Alpha (catalytic and regulation) and of a homodimer of 2 isoforms Beta (regulation).

The enzyme catalyses L-aspartate + ATP = 4-phospho-L-aspartate + ADP. It participates in amino-acid biosynthesis; L-lysine biosynthesis via DAP pathway; (S)-tetrahydrodipicolinate from L-aspartate: step 1/4. The protein operates within amino-acid biosynthesis; L-methionine biosynthesis via de novo pathway; L-homoserine from L-aspartate: step 1/3. Its pathway is amino-acid biosynthesis; L-threonine biosynthesis; L-threonine from L-aspartate: step 1/5. Feedback inhibition by lysine and threonine. In terms of biological role, catalyzes the phosphorylation of the beta-carboxyl group of aspartic acid with ATP to yield 4-phospho-L-aspartate, which is involved in the branched biosynthetic pathway leading to the biosynthesis of amino acids lysine, threonine, isoleucine and methionine. The polypeptide is Aspartokinase (ask) (Mycobacterium bovis (strain ATCC BAA-935 / AF2122/97)).